A 195-amino-acid polypeptide reads, in one-letter code: 4'-phosphopantetheinyl transferase AcpT (195 aa).

Belongs to the P-Pant transferase superfamily. Gsp/Sfp/HetI/AcpT family.

The catalysed reaction is apo-[ACP] + CoA = holo-[ACP] + adenosine 3',5'-bisphosphate + H(+). In terms of biological role, may be involved in an alternative pathway for phosphopantetheinyl transfer and holo-ACP synthesis in E.coli. The native apo-protein substrate is unknown. Is able to functionally replace AcpS in vivo but only when expressed at high levels. The chain is 4'-phosphopantetheinyl transferase AcpT from Escherichia coli (strain K12).